We begin with the raw amino-acid sequence, 241 residues long: 2,3-bisphosphoglycerate-dependent phosphoglycerate mutase (241 aa).

His12 functions as the Tele-phosphohistidine intermediate in the catalytic mechanism. Substrate-binding positions include 24 to 25, Arg61, 117 to 120, and Lys128; these read SG and ERYY. Glu117 serves as the catalytic Proton donor/acceptor.

Belongs to the phosphoglycerate mutase family. BPG-dependent PGAM subfamily.

The enzyme catalyses (2R)-2-phosphoglycerate = (2R)-3-phosphoglycerate. It participates in carbohydrate degradation; glycolysis; pyruvate from D-glyceraldehyde 3-phosphate: step 3/5. Its function is as follows. Catalyzes the interconversion of 2-phosphoglycerate and 3-phosphoglycerate. This is 2,3-bisphosphoglycerate-dependent phosphoglycerate mutase from Methanosarcina mazei (strain ATCC BAA-159 / DSM 3647 / Goe1 / Go1 / JCM 11833 / OCM 88) (Methanosarcina frisia).